The sequence spans 392 residues: Magnesium-chelatase 38 kDa subunit (392 aa).

Residues 1-17 (MTQTANAAKKTTSTKAS) show a composition bias toward low complexity. The interval 1-21 (MTQTANAAKKTTSTKASAAKE) is disordered. 80 to 87 (GHRGTGKS) is an ATP binding site.

Belongs to the Mg-chelatase subunits D/I family.

The catalysed reaction is protoporphyrin IX + Mg(2+) + ATP + H2O = Mg-protoporphyrin IX + ADP + phosphate + 3 H(+). It functions in the pathway porphyrin-containing compound metabolism; bacteriochlorophyll biosynthesis. Functionally, involved in bacteriochlorophyll biosynthesis; introduces a magnesium ion into protoporphyrin IX to yield Mg-protoporphyrin IX. This Chlorobaculum tepidum (strain ATCC 49652 / DSM 12025 / NBRC 103806 / TLS) (Chlorobium tepidum) protein is Magnesium-chelatase 38 kDa subunit (bchI).